We begin with the raw amino-acid sequence, 254 residues long: Tumor necrosis factor ligand superfamily member 9 (254 aa).

The Cytoplasmic segment spans residues 1 to 28 (MEYASDASLDPEAPWPPAPRARACRVLP). Residues 29 to 49 (WALVAGLLLLLLLAAACAVFL) form a helical; Signal-anchor for type II membrane protein membrane-spanning segment. The Extracellular segment spans residues 50 to 254 (ACPWAVSGAR…PAGLPSPRSE (205 aa)). Residues 91 to 240 (MFAQLVAQNV…GATVLGLFRV (150 aa)) form the THD domain.

Belongs to the tumor necrosis factor family. Homotrimer. As to expression, expressed in brain, placenta, lung, skeletal muscle and kidney.

The protein resides in the membrane. Its function is as follows. Cytokine that binds to TNFRSF9. Induces the proliferation of activated peripheral blood T-cells. May have a role in activation-induced cell death (AICD). May play a role in cognate interactions between T-cells and B-cells/macrophages. The sequence is that of Tumor necrosis factor ligand superfamily member 9 (TNFSF9) from Homo sapiens (Human).